Here is a 457-residue protein sequence, read N- to C-terminus: Exodeoxyribonuclease 7 large subunit (457 aa).

The protein belongs to the XseA family. Heterooligomer composed of large and small subunits.

The protein localises to the cytoplasm. The catalysed reaction is Exonucleolytic cleavage in either 5'- to 3'- or 3'- to 5'-direction to yield nucleoside 5'-phosphates.. Its function is as follows. Bidirectionally degrades single-stranded DNA into large acid-insoluble oligonucleotides, which are then degraded further into small acid-soluble oligonucleotides. In Citrobacter koseri (strain ATCC BAA-895 / CDC 4225-83 / SGSC4696), this protein is Exodeoxyribonuclease 7 large subunit.